Reading from the N-terminus, the 193-residue chain is Thymidine kinase (193 aa).

Residues 9-16 (STMNAGKS) and 87-90 (DEAQ) each bind ATP. The active-site Proton acceptor is the Glu88. Positions 145, 147, 182, and 185 each coordinate Zn(2+).

This sequence belongs to the thymidine kinase family. In terms of assembly, homotetramer.

It is found in the cytoplasm. It carries out the reaction thymidine + ATP = dTMP + ADP + H(+). In Haemophilus influenzae (strain ATCC 51907 / DSM 11121 / KW20 / Rd), this protein is Thymidine kinase.